A 151-amino-acid chain; its full sequence is MAKRVQVALTESIASLGKEGDLVDVAPGYARNFLLPYGKAMNVTPAVLKQIERKKEKEKIAAGKLKQEALDFQTALSTIGRFTIKKQVGEDGVLFGTVTNGDVAEAIEAATKKEIDRRNITVPDIHNLGAFTAKIKLHPEVNAEVNIEVTS.

Belongs to the bacterial ribosomal protein bL9 family.

Its function is as follows. Binds to the 23S rRNA. This is Large ribosomal subunit protein bL9 from Prochlorococcus marinus (strain AS9601).